Reading from the N-terminus, the 970-residue chain is Testis anion transporter 1 (970 aa).

The Cytoplasmic segment spans residues 1-95 (MAQLERSAIS…YRLKDWLLGD (95 aa)). A helical membrane pass occupies residues 96–116 (LLAGISVGLVQVPQGLTLSLL). At 117–119 (ARQ) the chain is on the extracellular side. Residues 120–140 (LIPPLNIAYAAFCSSVIYVIF) traverse the membrane as a helical segment. Residues 141–146 (GSCHQM) lie on the Cytoplasmic side of the membrane. A helical transmembrane segment spans residues 147 to 167 (SIGSFFLVSALLINVLKVSPF). The Extracellular segment spans residues 168-202 (NNGQLVMGSFVKNEFSAPSYLMGYNKSLSVVATTT). An N-linked (GlcNAc...) asparagine glycan is attached at asparagine 192. Residues 203-223 (FLTGIIQLIMGVLGLGFIATY) form a helical membrane-spanning segment. Topologically, residues 224–232 (LPESAMSAY) are cytoplasmic. Residues 233 to 253 (LAAVALHIMLSQLTFIFGIMI) traverse the membrane as a helical segment. At 254–270 (SFHAGPISFFYDIINYC) the chain is on the extracellular side. The chain crosses the membrane as a helical span at residues 271–291 (VALPKANSTSILVFLTVVVAL). Topologically, residues 292–307 (RINKCIRISFNQYPIE) are cytoplasmic. The chain crosses the membrane as a helical span at residues 308–328 (FPMELFLIIGFTVIANKISMA). The Extracellular segment spans residues 329–355 (TETSQTLIDMIPYSFLLPVTPDFSLLP). A helical transmembrane segment spans residues 356–376 (KIILQAFSLSLVSSFLLIFLG). At 377 to 392 (KKIASLHNYSVNSNQD) the chain is on the cytoplasmic side. A helical transmembrane segment spans residues 393–413 (LIAIGLCNVVSSFFRSCVFTG). Residues 414 to 429 (AIARTIIQDKSGGRQQ) are Extracellular-facing. A helical transmembrane segment spans residues 430 to 450 (FASLVGAGVMLLLMVKMGHFF). Residues 451 to 452 (YT) lie on the Cytoplasmic side of the membrane. The chain crosses the membrane as a helical span at residues 453-473 (LPNAVLAGIILSNVIPYLETI). Over 474–497 (SNLPSLWRQDQYDCALWMMTFSSS) the chain is Extracellular. Residues 498–518 (IFLGLDIGLIISVVSAFFITT) form a helical membrane-spanning segment. Over 519–970 (VRSHRAKILL…SPEGNSNEDV (452 aa)) the chain is Cytoplasmic. In terms of domain architecture, STAS spans 543–795 (DYREIITIPG…LSVHDAVLFA (253 aa)). Residues 664 to 970 (TVSSVSQKNQ…SPEGNSNEDV (307 aa)) form an interaction with RACGAP1 region. Residues 858 to 868 (SELDLELESEQ) show a composition bias toward acidic residues. Residues 858–970 (SELDLELESE…SPEGNSNEDV (113 aa)) form a disordered region. Residues 877–898 (DLDRELEPEMEPKAETETKTQT) show a composition bias toward basic and acidic residues. Residues 938–948 (STQSQTQTRTW) show a composition bias toward low complexity.

It belongs to the SLC26A/SulP transporter (TC 2.A.53) family. Interacts with RACGAP1. Interacts with CFTR; stimulates anion transport activity of CFTR. Post-translationally, N-glycosylated. Expression observed exclusively in testis, restricted to the meiotic phase of the germ cell. Abundant expression located in the seminiferous tubules, concentrated on the luminal side of the tubuli harboring the spermatocytes and spermatids.

It is found in the membrane. The enzyme catalyses sulfate(out) + chloride(in) = sulfate(in) + chloride(out). The catalysed reaction is oxalate(in) + chloride(out) = oxalate(out) + chloride(in). With respect to regulation, activity is inhibited by 4,4'-Di-isothiocyanatostilbene-2,2'-disulfonic acid (DIDS - an inhibitor of several anion channels and transporters) and gluconate. Its function is as follows. Antiporter that mediates the exchange of sulfate and oxalate against chloride ions across a membrane. Stimulates anion transport activity of CFTR. May cooperate with CFTR in the regulation of chloride and bicarbonate ions fluxes required for activation of the ADCY10/PKA pathway during sperm motility and sperm capacitation. May play a role in sperm tail differentiation and motility and hence male fertility. The sequence is that of Testis anion transporter 1 from Homo sapiens (Human).